We begin with the raw amino-acid sequence, 293 residues long: Proteinase T (293 aa).

Residues 1–12 constitute a propeptide that is removed on maturation; sequence EFIEQDAVVTIS. The Peptidase S8 domain maps to 19–293; it reads PWGLARISSQ…VLINNGEGSA (275 aa). Intrachain disulfides connect Cys-46-Cys-137 and Cys-192-Cys-262. Residues Asp-51, His-83, and Ser-238 each act as charge relay system in the active site.

The protein belongs to the peptidase S8 family.

Its function is as follows. Serine proteinase. The protein is Proteinase T (PROT) of Parengyodontium album (Tritirachium album).